We begin with the raw amino-acid sequence, 390 residues long: S-adenosylmethionine synthase 2 (390 aa).

Mg(2+) is bound at residue E9. H15 is a binding site for ATP. E43 provides a ligand contact to K(+). L-methionine contacts are provided by E56 and Q99. ATP-binding positions include D167 to K169, S235 to F238, D246, R252 to K253, A269, K273, and K277. Position 246 (D246) interacts with L-methionine. Residue K277 participates in L-methionine binding.

The protein belongs to the AdoMet synthase family. As to quaternary structure, homotetramer. Mn(2+) is required as a cofactor. Mg(2+) serves as cofactor. It depends on Co(2+) as a cofactor. The cofactor is K(+).

It localises to the cytoplasm. It catalyses the reaction L-methionine + ATP + H2O = S-adenosyl-L-methionine + phosphate + diphosphate. It functions in the pathway amino-acid biosynthesis; S-adenosyl-L-methionine biosynthesis; S-adenosyl-L-methionine from L-methionine: step 1/1. In terms of biological role, catalyzes the formation of S-adenosylmethionine from methionine and ATP. The reaction comprises two steps that are both catalyzed by the same enzyme: formation of S-adenosylmethionine (AdoMet) and triphosphate, and subsequent hydrolysis of the triphosphate. This chain is S-adenosylmethionine synthase 2 (SAM2), found in Actinidia chinensis var. chinensis (Chinese soft-hair kiwi).